The following is a 71-amino-acid chain: Large ribosomal subunit protein bL31 (71 aa).

C16, C18, C38, and C41 together coordinate Zn(2+).

Belongs to the bacterial ribosomal protein bL31 family. Type A subfamily. In terms of assembly, part of the 50S ribosomal subunit. Zn(2+) is required as a cofactor.

In terms of biological role, binds the 23S rRNA. This chain is Large ribosomal subunit protein bL31, found in Laribacter hongkongensis (strain HLHK9).